We begin with the raw amino-acid sequence, 318 residues long: Probable casein kinase I homolog ECU11_1980 (318 aa).

The 269-residue stretch at 8 to 276 (YTICREIGKG…YLNSLLDKIF (269 aa)) folds into the Protein kinase domain. Residues 14–22 (IGKGGFGKV) and lysine 37 contribute to the ATP site. Aspartate 129 serves as the catalytic Proton acceptor.

The protein belongs to the protein kinase superfamily. CK1 Ser/Thr protein kinase family. Casein kinase I subfamily.

Its subcellular location is the nucleus. It carries out the reaction L-seryl-[protein] + ATP = O-phospho-L-seryl-[protein] + ADP + H(+). It catalyses the reaction L-threonyl-[protein] + ATP = O-phospho-L-threonyl-[protein] + ADP + H(+). In terms of biological role, involved in DNA repair. May regulate the activity of protein(s) involved in double strand break repair caused by gamma rays. The chain is Probable casein kinase I homolog ECU11_1980 from Encephalitozoon cuniculi (strain GB-M1) (Microsporidian parasite).